A 448-amino-acid chain; its full sequence is Fibulin-5 (448 aa).

A signal peptide spans 1-23; that stretch reads MPGLKRILTVTILALWLPHPGNA. An EGF-like 1; calcium-binding domain is found at 42–82; it reads DIDECRTIPEACRGDMMCVNQNGGYLCIPRTNPVYRGPYSN. 17 cysteine pairs are disulfide-bonded: Cys-46/Cys-59, Cys-53/Cys-68, Cys-131/Cys-144, Cys-138/Cys-153, Cys-155/Cys-166, Cys-172/Cys-181, Cys-177/Cys-190, Cys-192/Cys-205, Cys-211/Cys-221, Cys-217/Cys-230, Cys-232/Cys-245, Cys-251/Cys-262, Cys-258/Cys-271, Cys-273/Cys-286, Cys-292/Cys-305, Cys-299/Cys-314, and Cys-320/Cys-332. The Cell attachment site signature appears at 54–56; the sequence is RGD. The EGF-like 2; calcium-binding domain occupies 127–167; that stretch reads DVDECATDSHQCNPTQICINTEGGYTCSCTDGYWLLEGQCL. The EGF-like 3; calcium-binding domain maps to 168-206; the sequence is DIDECRYGYCQQLCANVPGSYSCTCNPGFTLNDDGRSCQ. Positions 207 to 246 constitute an EGF-like 4; calcium-binding domain; the sequence is DVNECETENPCVQTCVNTYGSFICRCDPGYELEEDGIHCS. The interval 245–448 is interaction with LOXL1; the sequence is CSDMDECSFS…LRIYVSQYPF (204 aa). The region spanning 247 to 287 is the EGF-like 5; calcium-binding domain; that stretch reads DMDECSFSEFLCQHECVNQPGSYFCSCPPGYVLLDDNRSCQ. N-linked (GlcNAc...) asparagine glycosylation is found at Asn-283 and Asn-296. Residues 288–333 form the EGF-like 6; calcium-binding domain; the sequence is DINECEHRNHTCTSLQTCYNLQGGFKCIDPISCEEPYLLIGENRCM.

Belongs to the fibulin family. In terms of assembly, homodimer. Monomer, homodimerizes in presence of Ca(2+). Interacts with ELN. Interacts (via N-terminus) with the integrins ITGAV/ITGB3, ITGAV/ITGB5 and ITGA9/ITGB1. Interacts with FBN1 (via N-terminal domain). Forms a ternary complex with ELN and FBN1. Interacts with EFEMP2 with moderate affinity. Interacts with LOXL1. Post-translationally, N-glycosylated.

Its subcellular location is the secreted. It localises to the extracellular space. The protein resides in the extracellular matrix. In terms of biological role, essential for elastic fiber formation, is involved in the assembly of continuous elastin (ELN) polymer and promotes the interaction of microfibrils and ELN. Stabilizes and organizes elastic fibers in the skin, lung and vasculature. Promotes adhesion of endothelial cells through interaction of integrins and the RGD motif. Vascular ligand for integrin receptors which may play a role in vascular development and remodeling. May act as an adapter that mediates the interaction between FBN1 and ELN. The chain is Fibulin-5 (Fbln5) from Mus musculus (Mouse).